Here is a 189-residue protein sequence, read N- to C-terminus: Protein CotJC (189 aa).

It belongs to the manganese catalase family.

In terms of biological role, the cotJ operon proteins affect spore coat composition. They are either required for the normal formation of the inner layers of the coat or are themselves structural components of the coat. This Bacillus subtilis (strain 168) protein is Protein CotJC (cotJC).